We begin with the raw amino-acid sequence, 188 residues long: C-type lectin domain family 5 member A (188 aa).

Residues Met1–His4 lie on the Cytoplasmic side of the membrane. The chain crosses the membrane as a helical; Signal-anchor for type II membrane protein span at residues Met5–Phe27. Topologically, residues Pro28–Lys188 are extracellular. An N-linked (GlcNAc...) asparagine glycan is attached at Asn32. The cysteines at positions 71 and 82 are disulfide-linked. A C-type lectin domain is found at Tyr78–Glu184. Asn93, Asn144, and Asn151 each carry an N-linked (GlcNAc...) asparagine glycan. 2 disulfide bridges follow: Cys99-Cys183 and Cys161-Cys175.

As to quaternary structure, monomer. Homodimer. The majority of CLEC5A is expressed as a monomeric form on macrophages. Interacts with TYROBP/DAP12. The interaction with TYROBP is required for CLEC5A cell surface expression. Interacts with HCST/DAP10. Forms a CLEC5A/TYROBP/HCST trimolecular complex depending almost solely on TYROBP. (Microbial infection) Interacts with dengue virus envelope protein E. In terms of processing, N-glycosylated. Contains sialic acid residues. As to expression, highly expressed in bone marrow with lower levels in synovium, lung and bronchus. Expressed in peripheral blood monocytes and in the monocyte/macrophage cell lines U-937 and Mono-Mac-6, but not in cell lines of other origins. Expression is down-regulated when monocytes differentiate into dendritic cells.

It is found in the cell membrane. Functions as a positive regulator of osteoclastogenesis. Cell surface receptor that signals via TYROBP. Regulates inflammatory responses. In terms of biological role, (Microbial infection) Critical macrophage receptor for dengue virus serotypes 1-4. The binding of dengue virus to CLEC5A triggers signaling through the phosphorylation of TYROBP. This interaction does not result in viral entry, but stimulates pro-inflammatory cytokine release. This Homo sapiens (Human) protein is C-type lectin domain family 5 member A (CLEC5A).